The chain runs to 271 residues: Phosphonoacetaldehyde hydrolase (271 aa).

Asp12 serves as the catalytic Nucleophile. 2 residues coordinate Mg(2+): Asp12 and Ala14. Lys54 functions as the Schiff-base intermediate with substrate in the catalytic mechanism. Asp188 contacts Mg(2+).

The protein belongs to the HAD-like hydrolase superfamily. PhnX family. In terms of assembly, homodimer. The cofactor is Mg(2+).

The catalysed reaction is phosphonoacetaldehyde + H2O = acetaldehyde + phosphate + H(+). Its function is as follows. Involved in phosphonate degradation. The chain is Phosphonoacetaldehyde hydrolase from Vibrio campbellii (strain ATCC BAA-1116).